Consider the following 291-residue polypeptide: MEMO1 family protein PYRAB05390 (291 aa).

The protein belongs to the MEMO1 family.

In Pyrococcus abyssi (strain GE5 / Orsay), this protein is MEMO1 family protein PYRAB05390.